We begin with the raw amino-acid sequence, 1249 residues long: MDAKARNCLLQHKEALEKDIKTSYIMDHMISNGVLTVVEEEKVKSQATQYQRAAALIKMILNKDNYAYISFYNALLHEGYKDLAGLLHSGLPLVSSSSGKDTDGGNTSFVRTVLCEGGVPQRPVIFVTRKKLVSAIQQKLWKLNGEPGWVTIYGMAGCGKSVLAAEAVRDHALLEGCFSGGVHWVSIGKQDKSGLLMKLQNLCTRLGQEESFSQRLPLNIEEAKDRLRVLMLRKHPRSLLILDDVWDPWVLKAFDNQCQILLTTRDKSVTDSVMGPKYVIPVESGLGKEKGLEILSLFVNMKKEDLPVEAHSIIKECKGSPLVVSLVGALLRDFPNRWAYYLRQLQNKQFKRIRKSSSYDYEALDEAMSISVEMLREDIKDYYTDLSILQKDVKVPTKVLCVLWDLETEEVEDILQEFVNKSLLFCNRNGKSFCYYLHDLQVDFLTEKNRSQLQDLHRKMVTQFQRYHQPHTLSPGQEDCMYWYNFLAYHMASAGMHKELCALMFSLDWIKAKTELVGPAHLIHEFVEYRHILDEKDCAVCENFQEFLSLNGHLLGRQPFPNIVQLGLCEPETSEVYQQAKLQAKQEVDTGRLYLEWINKKTIKNLSRLVVRPHTDAVYHACFSQDGQRIASCGADKTLQVFKAETGEKLLDIKAHEDEVLCCAFSSDDSYIATCSVDKKVKIWDSGTGKLVHTYEEHSEQVNCCHFTNKSNHLLLATGSNDSFLKLWDLNQKECRNTMFGHTNSVTHCRFSPDDELLASCSADGTLKLWDVRSANEKKSINVKRFFLSSEDPPEDVEVIVKCCSWSADGDRIIVAAKNKVLLLDIHTSGLLTEIHTGHHSTIQYCDFSPYDHLAVIALSQYCVELWNIDSRVKVADCRGHLSWVHGVMFSPDGSSFLTASDDQTIRVWETRKVCKNSAIVLKQEIDVVFQENEMMVLAVDNIRGLQLIAGKTGQIDYLPEAQVSCCCLSPHLEYVAFGDEEGAIKIIELPNNRVFSSGIGHKKAVRHIQFTADGKTLISSSEDSVIQVWNWQTEEYVFLQAHQETVKDFRLLRDSRLLSWSFDGTVKVWNVITGRIERDFTCHQGTVLSCAISSDATKFSSTSADKTAKIWSFELPSPLHELKGHNSCVRCSAFSLDGILLATGDDNGEIRIWNVSDGQLLHLCAPISIEEGTATHGGWVTDVCFSPDRKMLVSAGGYLKWWNVVTGESSQTFYTNGTNLKKIHVSPDFRTYVTVDNLGILYILQVLE.

The 90-residue stretch at Met1–Gly90 folds into the CARD domain. Positions Asn106 to Leu415 constitute an NB-ARC domain. Residues Gly154–Ser161 and Arg265 each bind ATP. Residues Pro613–Asp652 form a WD 1-1 repeat. The WD 1-2 repeat unit spans residues Ala655 to Thr694. Residues Glu697–Thr738 form a WD 1-3 repeat. The WD 1-4 repeat unit spans residues Gly741 to Ser780. Residues Asp796 to Thr837 form a WD 1-5 repeat. The stretch at Gly838–Asp877 is one WD 1-6 repeat. One copy of the WD 1-7 repeat lies at Gly880–Glu910. An interpropeller linker region spans residues Glu910–Val921. Residues Leu922–Tyr958 form a WD 2-1 repeat. Residues Leu959–Ser998 form a WD 2-2 repeat. The stretch at Gly1001–Leu1040 is one WD 2-3 repeat. The stretch at Ala1042 to Asp1080 is one WD 2-4 repeat. Residues Cys1083–Glu1122 form a WD 2-5 repeat. Residues Gly1125–Leu1164 form a WD 2-6 repeat. The WD 2-7 repeat unit spans residues Thr1176–Thr1213. The stretch at Phe1214–Glu1249 is one WD 2-8 repeat.

As to quaternary structure, monomer. Oligomerizes to a heptameric ring, known as the apoptosome, upon binding of cytochrome c and dATP. Oligomeric Apaf-1 and pro-caspase-9 bind to each other via their respective NH2-terminal CARD domains. Interacts with UACA. Interacts with APIP. Interacts (via CARD and NACHT domains) with NAIP/BIRC1 (via NACHT domain). Interacts with CIAO2A.

Its subcellular location is the cytoplasm. Its function is as follows. Regulates programmed cell death; necessary for normal brain development. Participates with pro-caspase-9 (Apaf-3) in the cytochrome c-dependent activation of caspase-3, leading to apoptosis. This activation requires ATP. The protein is Apoptotic protease-activating factor 1 (Apaf1) of Rattus norvegicus (Rat).